The primary structure comprises 468 residues: MGTVCESVATAKSSTAVMSSIPPFLSKTYDMVDDPLTDDVVSWSSGNNSFVVWNVPEFAKQFLPKYFKHNNFSSFVRQLNTYGFRKVDPDRWEFANEGFLRGQKQILKSIVRRKPAQVQPPQQPQVQHSSVGACVEVGKFGLEEEVERLQRDKNVLMQELVRLRQQQQVTEHHLQNVGQKVHVMEQRQQQMMSFLAKAVQSPGFLNQFSQQSNEANQHISESNKKRRLPVEDQMNSGSHGVNGLSRQIVRYQSSMNDATNTMLQQIQQMSNAPSHESLSSNNGSFLLGDVPNSNISDNGSSSNGSPEVTLADVSSIPAGFYPAMKYHEPCETNQVMETNLPFSQGDLLPPTQGAAASGSSSSDLVGCETDNGECLDPIMAVLDGALELEADTLNELLPEVQDSFWEQFIGESPVIGETDELISGSVENELILEQLELQSTLSNVWSKNQQMNHLTEQMGLLTSDALRK.

The DNA-binding element occupies 21 to 115 (IPPFLSKTYD…ILKSIVRRKP (95 aa)). Positions 133–199 (ACVEVGKFGL…QMMSFLAKAV (67 aa)) are hydrophobic repeat HR-A/B. The span at 211-220 (QSNEANQHIS) shows a compositional bias: polar residues. 2 disordered regions span residues 211–244 (QSNEANQHISESNKKRRLPVEDQMNSGSHGVNGL) and 268–309 (QMSN…PEVT). The Nuclear localization signal motif lies at 223–227 (NKKRR). Low complexity predominate over residues 277-305 (SLSSNNGSFLLGDVPNSNISDNGSSSNGS). Residues 402–411 (DSFWEQFIGE) carry the AHA motif. The Nuclear export signal motif lies at 454–461 (LTEQMGLL).

This sequence belongs to the HSF family. Class A subfamily. In terms of assembly, homotrimer. Exhibits temperature-dependent phosphorylation.

The protein localises to the cytoplasm. Its subcellular location is the nucleus. Transcriptional activator that specifically binds DNA sequence 5'-AGAAnnTTCT-3' known as heat shock promoter elements (HSE). This Arabidopsis thaliana (Mouse-ear cress) protein is Heat stress transcription factor A-1e (HSFA1E).